The sequence spans 331 residues: Serine/threonine-protein phosphatase PP1 isozyme 7 (331 aa).

At Met1 the chain carries N-acetylmethionine. Residues Asp60, His62, Asp88, and Asn120 each contribute to the Mn(2+) site. His121 functions as the Proton donor in the catalytic mechanism. Mn(2+) contacts are provided by His169 and His244.

It belongs to the PPP phosphatase family. PP-1 subfamily. Mn(2+) serves as cofactor. As to expression, expressed in roots, rosettes and flowers.

Its subcellular location is the nucleus. It localises to the cytoplasm. The enzyme catalyses O-phospho-L-seryl-[protein] + H2O = L-seryl-[protein] + phosphate. The catalysed reaction is O-phospho-L-threonyl-[protein] + H2O = L-threonyl-[protein] + phosphate. Phosphatase activity is strongly reduced by the protein phosphatase inhibitor 2 (I-2). Serine/threonine-protein phosphatase that possesses phosphatase activity toward para-nitrophenyl phosphate (pNPP) in vitro. The polypeptide is Serine/threonine-protein phosphatase PP1 isozyme 7 (Arabidopsis thaliana (Mouse-ear cress)).